The sequence spans 312 residues: Porphobilinogen deaminase (312 aa).

Cys-241 carries the S-(dipyrrolylmethanemethyl)cysteine modification.

The protein belongs to the HMBS family. In terms of assembly, monomer. Requires dipyrromethane as cofactor.

It catalyses the reaction 4 porphobilinogen + H2O = hydroxymethylbilane + 4 NH4(+). Its pathway is porphyrin-containing compound metabolism; protoporphyrin-IX biosynthesis; coproporphyrinogen-III from 5-aminolevulinate: step 2/4. It participates in porphyrin-containing compound metabolism; chlorophyll biosynthesis. Tetrapolymerization of the monopyrrole PBG into the hydroxymethylbilane pre-uroporphyrinogen in several discrete steps. The protein is Porphobilinogen deaminase (hemC) of Chlorobaculum parvum (strain DSM 263 / NCIMB 8327) (Chlorobium vibrioforme subsp. thiosulfatophilum).